The chain runs to 218 residues: ATP phosphoribosyltransferase (218 aa).

The protein belongs to the ATP phosphoribosyltransferase family. Short subfamily. As to quaternary structure, heteromultimer composed of HisG and HisZ subunits.

The protein resides in the cytoplasm. The catalysed reaction is 1-(5-phospho-beta-D-ribosyl)-ATP + diphosphate = 5-phospho-alpha-D-ribose 1-diphosphate + ATP. The protein operates within amino-acid biosynthesis; L-histidine biosynthesis; L-histidine from 5-phospho-alpha-D-ribose 1-diphosphate: step 1/9. In terms of biological role, catalyzes the condensation of ATP and 5-phosphoribose 1-diphosphate to form N'-(5'-phosphoribosyl)-ATP (PR-ATP). Has a crucial role in the pathway because the rate of histidine biosynthesis seems to be controlled primarily by regulation of HisG enzymatic activity. This chain is ATP phosphoribosyltransferase, found in Acaryochloris marina (strain MBIC 11017).